A 277-amino-acid chain; its full sequence is Bleomycin hydrolase (277 aa).

Cys-53 is a catalytic residue.

This sequence belongs to the peptidase C1 family. In terms of assembly, homohexamer. Interacts with NUDT12 (via ANK repeats).

Its subcellular location is the cytoplasm. It is found in the cytoplasmic granule. It catalyses the reaction Inactivates bleomycin B2 (a cytotoxic glycometallopeptide) by hydrolysis of a carboxyamide bond of beta-aminoalanine, but also shows general aminopeptidase activity. The specificity varies somewhat with source, but amino acid arylamides of Met, Leu and Ala are preferred.. With respect to regulation, strongly inhibited by leupeptin, puromycin, NEM, and divalent cations. In terms of biological role, the normal physiological role of BLM hydrolase is unknown, but it catalyzes the inactivation of the antitumor drug BLM (a glycopeptide) by hydrolyzing the carboxamide bond of its B-aminoalaninamide moiety thus protecting normal and malignant cells from BLM toxicity. The protein is Bleomycin hydrolase (BLMH) of Oryctolagus cuniculus (Rabbit).